Consider the following 462-residue polypeptide: Putative ABC transporter A445L (462 aa).

This sequence belongs to the protein kinase superfamily. ADCK protein kinase family.

The protein is Putative ABC transporter A445L of Chlorella (PBCV-1).